The following is a 369-amino-acid chain: Fructose-bisphosphate aldolase (369 aa).

D40 is a dihydroxyacetone phosphate binding site. Positions 42 and 45 each coordinate D-glyceraldehyde 3-phosphate. Residue R49 coordinates beta-D-fructose 1,6-bisphosphate. K113 is a binding site for D-glyceraldehyde 3-phosphate. A dihydroxyacetone phosphate-binding site is contributed by K152. E195 contributes to the D-glyceraldehyde 3-phosphate binding site. Residue E195 is the Proton acceptor of the active site. Positions 237, 279, and 280 each coordinate dihydroxyacetone phosphate. K237 acts as the Schiff-base intermediate with dihydroxyacetone phosphate in catalysis. Beta-D-fructose 1,6-bisphosphate is bound by residues 279–281 (SGG) and S307. Positions 309 and 310 each coordinate dihydroxyacetone phosphate. R310 is a binding site for beta-D-fructose 1,6-bisphosphate.

The protein belongs to the class I fructose-bisphosphate aldolase family. Homotetramer. Interacts with TRAP (via cytoplasmic domain); the interaction prevents substrate binding and thereby inhibits aldolase activity. Interacts with MTRAP (via cytoplasmic domain); MTRAP phosphorylation may increase the binding to FBPA. Interact with RH1 (via cytoplasmic domain). Interacts with RH2b (via cytoplasmic domain). Interacts with RH4 (via cytoplasmic domain). Interacts with AMA1 (via cytoplasmic domain); the interaction is weak, however it may be increased upon AMA1 phosphorylation. Interacts with EBA140 (via cytoplasmic domain); the interaction is weak. Interacts with EBA175 (via cytoplasmic domain); the interaction is weak. Interacts with EBA181 (via cytoplasmic domain); the interaction is weak. Interacts with G-actin and F-actin. May interact with ACT2/actin II; the interaction inhibits FBPA catalytic activity. Interacts with human SLC4A1/band 3 (via N-terminus); the interaction inhibits FBPA catalytic activity.

Its subcellular location is the cytoplasm. It is found in the membrane. The protein localises to the host cell membrane. It catalyses the reaction beta-D-fructose 1,6-bisphosphate = D-glyceraldehyde 3-phosphate + dihydroxyacetone phosphate. It participates in carbohydrate degradation; glycolysis; D-glyceraldehyde 3-phosphate and glycerone phosphate from D-glucose: step 4/4. With respect to regulation, the cytoplasmic tail of TRAP and probably other adhesins acts as a competitive inhibitor as the binding sites of the glycolytic substrate fructose 1,6-bisphosphate and TRAP partially overlap. In terms of biological role, plays a key role in glycolysis by catalyzing the cleavage of fructose 1,6-bisphosphate into dihydroxyacetone phosphate and glyceraldehyde 3-phosphate. Independently of its catalytic activity, connects the actin filaments, and thus the actomyosin motor, to cell surface adhesins of the thrombospondin-related anonymous protein (TRAP), the erythrocyte binding ligand (EBL) and reticulocyte binding homolog (RH) protein families; this interaction is probably involved in transducing the motor force across the parasite surface required for sporozoite and ookinete gliding motility and merozoite invasion. Stimulates actin polymerisation. This is Fructose-bisphosphate aldolase from Plasmodium falciparum (isolate 3D7).